A 178-amino-acid chain; its full sequence is Glucagon-2 (178 aa).

The signal sequence occupies residues 1-21; the sequence is MFGIHSLAGVLLLVIVQSQLA. 3 propeptides span residues 83–87, 123–134, and 171–178; these read SGAPS, ESAEESMNGPMS, and SNKRQEDH.

Belongs to the glucagon family.

The protein localises to the secreted. In terms of biological role, promotes hydrolysis of glycogen and lipids, and raises the blood sugar level. This is Glucagon-2 (gcg2) from Oncorhynchus mykiss (Rainbow trout).